A 237-amino-acid polypeptide reads, in one-letter code: Orotidine 5'-phosphate decarboxylase (237 aa).

Substrate is bound by residues Asp-11, Lys-34, Asp-61–Thr-70, Thr-123, Arg-185, Gln-194, Gly-214, and Arg-215. The Proton donor role is filled by Lys-63.

Belongs to the OMP decarboxylase family. Type 1 subfamily. In terms of assembly, homodimer.

It catalyses the reaction orotidine 5'-phosphate + H(+) = UMP + CO2. Its pathway is pyrimidine metabolism; UMP biosynthesis via de novo pathway; UMP from orotate: step 2/2. Its function is as follows. Catalyzes the decarboxylation of orotidine 5'-monophosphate (OMP) to uridine 5'-monophosphate (UMP). The polypeptide is Orotidine 5'-phosphate decarboxylase (Ligilactobacillus salivarius (strain UCC118) (Lactobacillus salivarius)).